The primary structure comprises 139 residues: ATP synthase epsilon chain 2 (139 aa).

This sequence belongs to the ATPase epsilon chain family. As to quaternary structure, F-type ATPases have 2 components, CF(1) - the catalytic core - and CF(0) - the membrane proton channel. CF(1) has five subunits: alpha(3), beta(3), gamma(1), delta(1), epsilon(1). CF(0) has three main subunits: a, b and c.

It localises to the cell inner membrane. Its function is as follows. Produces ATP from ADP in the presence of a proton gradient across the membrane. The protein is ATP synthase epsilon chain 2 of Paraburkholderia xenovorans (strain LB400).